Here is a 682-residue protein sequence, read N- to C-terminus: Solute carrier organic anion transporter family member 2B1 (682 aa).

Residues 1-30 (MPDRSTKATMGAEDIHERKVSMEPRDSHQD) form a disordered region. At 1–41 (MPDRSTKATMGAEDIHERKVSMEPRDSHQDAQPRGMFQNIK) the chain is on the cytoplasmic side. The segment covering 13 to 30 (EDIHERKVSMEPRDSHQD) has biased composition (basic and acidic residues). At S21 the chain carries Phosphoserine. A helical transmembrane segment spans residues 42-61 (FFVLCHSILQLAQLMISGYL). Residues 62 to 80 (KSSISTVEKRFGLSSQTSG) are Extracellular-facing. The helical transmembrane segment at 81–101 (LLAAFNEVGNISLILFVSYFG) threads the bilayer. Over 102 to 107 (SRVHRP) the chain is Cytoplasmic. Residues 108 to 132 (RMIGCGAILVAVAGLLMALPHFISE) traverse the membrane as a helical segment. At 133 to 176 (PYRYDHSSPDRSQDFEASLCLPTTMAPASALSNDSCSSRTETKH) the chain is on the extracellular side. The N-linked (GlcNAc...) asparagine glycan is linked to N165. The helical transmembrane segment at 177-206 (LTMVGIMFTAQTLLGIGGVPIQPFGISYID) threads the bilayer. The Cytoplasmic portion of the chain corresponds to 207–225 (DFAHHSNSPLYLGILFAIT). A helical membrane pass occupies residues 226 to 246 (MMGPGLAYGLGSLMLRLYVDI). At 247-264 (DRMPEGGINLTTKDPRWV) the chain is on the extracellular side. The N-linked (GlcNAc...) asparagine glycan is linked to N255. Residues 265-289 (GAWWLGFLISAGLVVLAASPYFFFP) traverse the membrane as a helical segment. Residues 290-354 (REMPKEKYEL…IKVFPRVLLR (65 aa)) lie on the Cytoplasmic side of the membrane. 2 positions are modified to phosphoserine: S311 and S314. A helical membrane pass occupies residues 355–376 (TLRHPIFLLVVLSQVCTSSMVA). The Extracellular segment spans residues 377 to 396 (GTATFLPKFLERQFSITASF). A helical membrane pass occupies residues 397-420 (ANLLLGCLTIPLAIVGIVVGGVLV). Topologically, residues 421–424 (KRLH) are cytoplasmic. Residues 425–448 (LSPMQCSALCLLGSLLCLLLSLPL) traverse the membrane as a helical segment. Residues 449 to 552 (FFIGCSTHHI…SACSRLVLPF (104 aa)) are Extracellular-facing. The Kazal-like domain maps to 471–531 (PSLFPGCSEP…VFYTNCSCVA (61 aa)). Intrachain disulfides connect C477-C508, C483-C504, and C492-C529. 2 N-linked (GlcNAc...) asparagine glycosylation sites follow: N526 and N533. Residues 553 to 575 (ILLISLGAAVASITHTPSFMLIL) form a helical membrane-spanning segment. Topologically, residues 576-584 (RGVKKEDKT) are cytoplasmic. Residues 585–610 (LAVGMQFMLLRVLAWMPSPVIHGSAI) traverse the membrane as a helical segment. Residues 611–643 (DTTCVHWALTCGRRAVCRYYDHDLLRNRFIGLQ) lie on the Extracellular side of the membrane. A helical transmembrane segment spans residues 644–661 (FFFKSGSLVCFALVLAIL). The Cytoplasmic segment spans residues 662–682 (RQQSREASTKATVKSSDLQEL).

It belongs to the organo anion transporter (TC 2.A.60) family. As to expression, expressed in liver, kidney, heart, lung and retina. Widely distributed in all brain regions.

The protein localises to the cell membrane. It localises to the basal cell membrane. The protein resides in the apical cell membrane. The enzyme catalyses coproporphyrin III(out) = coproporphyrin III(in). It carries out the reaction substance P(out) = substance P(in). It catalyses the reaction taurocholate(out) = taurocholate(in). The catalysed reaction is prostaglandin E1(out) = prostaglandin E1(in). The enzyme catalyses prostaglandin E2(out) = prostaglandin E2(in). It carries out the reaction prostaglandin D2(out) = prostaglandin D2(in). It catalyses the reaction leukotriene C4(out) = leukotriene C4(in). The catalysed reaction is L-thyroxine(out) = L-thyroxine(in). Functionally, mediates the Na(+)-independent transport of organic anions such as taurocholate, the prostaglandins D2 (PGD2), E1 (PGE1) and E2 (PGE2), leukotriene C4, thromboxane B2 and L-thyroxine. Also plays a role in the reuptake of neuropeptides such as substance P/TAC1 and vasoactive intestinal peptide/VIP released from retinal neurons. May act as a heme transporter that promotes cellular iron availability. Also transports heme by-product coproporphyrin III (CPIII), and may be involved in their hepatic disposition. May contribute to regulate the transport of organic compounds in testis across the blood-testis-barrier. Shows a pH-sensitive substrate specificity which may be ascribed to the protonation state of the binding site and leads to a stimulation of substrate transport in an acidic microenvironment. The exact transport mechanism has not been yet deciphered but most likely involves an anion exchange, coupling the cellular uptake of organic substrate with the efflux of an anionic compound. Hydrogencarbonate/HCO3(-) acts as a probable counteranion that exchanges for organic anions. Cytoplasmic glutamate may also act as counteranion in the placenta. This chain is Solute carrier organic anion transporter family member 2B1, found in Rattus norvegicus (Rat).